Reading from the N-terminus, the 29-residue chain is Brevinin-2Ed (29 aa).

Cys-23 and Cys-29 are disulfide-bonded.

Belongs to the frog skin active peptide (FSAP) family. Brevinin subfamily. Expressed by the skin glands.

The protein localises to the secreted. Functionally, shows antibacterial activity against representative Gram-negative and Gram-positive bacterial species, and hemolytic activity. This is Brevinin-2Ed from Pelophylax lessonae (Pool frog).